Consider the following 535-residue polypeptide: Alpha-1,3-mannosyl-glycoprotein 4-beta-N-acetylglucosaminyltransferase A (535 aa).

Residues 1–6 lie on the Cytoplasmic side of the membrane; that stretch reads MRLRNG. The chain crosses the membrane as a helical; Signal-anchor for type II membrane protein span at residues 7–27; sequence TVATVLVFITTFLSLSWYTAW. The stretch at 28–54 forms a coiled coil; that stretch reads QNGKEKLIAYQREFHALKERLRIAEHR. The Lumenal portion of the chain corresponds to 28–535; the sequence is QNGKEKLIAY…NEIHIKKMTN (508 aa). N77, N85, and N458 each carry an N-linked (GlcNAc...) asparagine glycan.

The protein belongs to the glycosyltransferase 54 family. A divalent metal cation is required as a cofactor. Post-translationally, N-glycosylated.

The protein resides in the golgi apparatus membrane. Its subcellular location is the secreted. It catalyses the reaction N(4)-{beta-D-GlcNAc-(1-&gt;2)-alpha-D-Man-(1-&gt;3)-[beta-D-GlcNAc-(1-&gt;2)-alpha-D-Man-(1-&gt;6)]-beta-D-Man-(1-&gt;4)-beta-D-GlcNAc-(1-&gt;4)-beta-D-GlcNAc}-L-asparaginyl-[protein] + UDP-N-acetyl-alpha-D-glucosamine = N(4)-{beta-D-GlcNAc-(1-&gt;2)-[beta-D-GlcNAc-(1-&gt;4)]-alpha-D-Man-(1-&gt;3)-[beta-D-GlcNAc-(1-&gt;2)-alpha-D-Man-(1-&gt;6)]-beta-D-Man-(1-&gt;4)-beta-D-GlcNAc-(1-&gt;4)-beta-D-GlcNAc}-L-asparaginyl-[protein] + UDP + H(+). It carries out the reaction an N(4)-{beta-D-GlcNAc-(1-&gt;2)-alpha-D-Man-(1-&gt;3)-[alpha-D-Man-(1-&gt;6)]-beta-D-Man-(1-&gt;4)-beta-D-GlcNAc-(1-&gt;4)-beta-D-GlcNAc}-L-asparaginyl-[protein] + UDP-N-acetyl-alpha-D-glucosamine = an N(4)-{beta-D-GlcNAc-(1-&gt;2)-[beta-D-GlcNAc-(1-&gt;4)]-alpha-D-Man-(1-&gt;3)-[alpha-D-Man-(1-&gt;6)]-beta-D-Man-(1-&gt;4)-beta-D-GlcNAc-(1-&gt;4)-beta-D-GlcNAc}-L-asparaginyl-[protein] + UDP + H(+). The enzyme catalyses an N(4)-{beta-D-GlcNAc-(1-&gt;2)-alpha-D-Man-(1-&gt;3)-[beta-D-GlcNAc-(1-&gt;2)-[beta-D-GlcNAc-(1-&gt;6)]-alpha-D-Man-(1-&gt;6)]-beta-D-Man-(1-&gt;4)-beta-D-GlcNAc-(1-&gt;4)-beta-D-GlcNAc}-L-asparaginyl-[protein] + UDP-N-acetyl-alpha-D-glucosamine = an N(4)-{beta-D-GlcNAc-(1-&gt;2)-[beta-D-GlcNAc-(1-&gt;4)]-alpha-D-Man-(1-&gt;3)-[beta-D-GlcNAc-(1-&gt;2)-[beta-D-GlcNAc-(1-&gt;6)]-alpha-D-Man-(1-&gt;6)]-beta-D-Man-(1-&gt;4)-beta-D-GlcNAc-(1-&gt;4)-beta-D-GlcNAc}-L-asparaginyl-[protein] + UDP + H(+). The catalysed reaction is an N(4)-{beta-D-GlcNAc-(1-&gt;2)-alpha-D-Man-(1-&gt;3)-[beta-D-GlcNAc-(1-&gt;2)-alpha-D-Man-(1-&gt;6)]-beta-D-Man-(1-&gt;4)-beta-D-GlcNAc-(1-&gt;4)-[alpha-L-Fuc-(1-&gt;6)]-beta-D-GlcNAc}-L-asparaginyl-[protein] + UDP-N-acetyl-alpha-D-glucosamine = N(4)-{beta-D-GlcNAc-(1-&gt;2)-[beta-D-GlcNAc-(1-&gt;4)]-alpha-D-Man-(1-&gt;3)-[beta-D-GlcNAc-(1-&gt;2)-alpha-D-Man-(1-&gt;6)]-beta-D-Man-(1-&gt;4)-beta-D-GlcNAc-(1-&gt;4)-[alpha-L-Fuc-(1-&gt;6)]-beta-D-GlcNAc}-asparaginyl-[protein] + UDP + H(+). It catalyses the reaction an N(4)-{beta-D-GlcNAc-(1-&gt;2)-alpha-D-Man-(1-&gt;3)-[beta-D-Gal-(1-&gt;4)-beta-D-GlcNAc-(1-&gt;2)-alpha-D-Man-(1-&gt;6)]-beta-D-Man-(1-&gt;4)-beta-D-GlcNAc-(1-&gt;4)-beta-D-GlcNAc}-L-asparaginyl-[protein] + UDP-N-acetyl-alpha-D-glucosamine = an N(4)-{beta-D-GlcNAc-(1-&gt;2)-[beta-D-GlcNAc-(1-&gt;4)]-alpha-D-Man-(1-&gt;3)-[beta-D-Gal-(1-&gt;4)-beta-D-GlcNAc-(1-&gt;2)-alpha-D-Man-(1-&gt;6)]-beta-D-Man-(1-&gt;4)-beta-D-GlcNAc-(1-&gt;4)-beta-D-GlcNAc}-L-asparaginyl-[protein] + UDP + H(+). It carries out the reaction N(4)-{beta-D-GlcNAc-(1-&gt;2)-alpha-D-Man-(1-&gt;3)-[alpha-D-Man-(1-&gt;3)-{alpha-D-Man-(1-&gt;6)}-alpha-D-Man-(1-&gt;6)]-beta-D-Man-(1-&gt;4)-beta-D-GlcNAc-(1-&gt;4)-beta-D-GlcNAc}-asparaginyl-[protein] + UDP-N-acetyl-alpha-D-glucosamine = N(4)-{beta-D-GlcNAc-(1-&gt;2)-[beta-D-GlcNAc-(1-&gt;4)]-alpha-D-Man-(1-&gt;3)-[alpha-D-Man-(1-&gt;3)-{alpha-D-Man-(1-&gt;6)}-alpha-D-Man-(1-&gt;6)]-beta-D-Man-(1-&gt;4)-beta-D-GlcNAc-(1-&gt;4)-beta-D-GlcNAc}-asparaginyl-[protein] + UDP + H(+). The enzyme catalyses N(4)-{beta-D-GlcNAc-(1-&gt;2)-alpha-D-Man-(1-&gt;3)-beta-D-Man-(1-&gt;4)-beta-D-GlcNAc-(1-&gt;4)-beta-D-GlcNAc}-asparaginyl-[protein] + UDP-N-acetyl-alpha-D-glucosamine = N(4)-{beta-D-GlcNAc-(1-&gt;2)-[beta-D-GlcNAc-(1-&gt;4)]-alpha-D-Man-(1-&gt;3)-beta-D-Man-(1-&gt;4)-beta-D-GlcNAc-(1-&gt;4)-beta-D-GlcNAc}-asparaginyl-[protein] + UDP + H(+). It participates in protein modification; protein glycosylation. Its activity is regulated as follows. Inhibited by UDP. Its function is as follows. Glycosyltransferase that catalyze the transfer of GlcNAc from UDP-GlcNAc to the GlcNAcbeta1-2Manalpha1-3 arm of the core structure of N-linked glycans through a beta1-4 linkage and participates in the production of tri- and tetra-antennary N-linked sugar chains. Involved in glucose transport by mediating SLC2A2/GLUT2 glycosylation, thereby controlling cell-surface expression of SLC2A2 in pancreatic beta cells. The protein is Alpha-1,3-mannosyl-glycoprotein 4-beta-N-acetylglucosaminyltransferase A of Gallus gallus (Chicken).